The following is a 308-amino-acid chain: Very-long-chain enoyl-CoA reductase (308 aa).

At 1–86 the chain is on the cytoplasmic side; it reads MKHYEVEIRD…YFRDLGAQIS (86 aa). N6-acetyllysine is present on Lys-22. Residue Ser-58 is modified to Phosphoserine. An N6-acetyllysine modification is found at Lys-60. A helical transmembrane segment spans residues 87–106; the sequence is WVTVFLTEYAGPLFIYLLFY. The Lumenal portion of the chain corresponds to 107–124; that stretch reads FRVPFIYGRKYDFTSSRH. A helical membrane pass occupies residues 125-147; it reads TVVHLACMCHSFHYIKRLLETLF. At 148-158 the chain is on the cytoplasmic side; sequence VHRFSHGTMPL. Residues 159-180 form a helical membrane-spanning segment; sequence RNIFKNCTYYWGFAAWMAYYIN. Over 181 to 189 the chain is Lumenal; that stretch reads HPLYTPPTY. Residues 190 to 216 traverse the membrane as a helical segment; it reads GVQQVKLALAIFVICQLGNFSIHMALR. Residues 217 to 245 are Cytoplasmic-facing; it reads DLRPAGSKTRKIPYPTKNPFTWLFLLVSC. A helical membrane pass occupies residues 246 to 262; it reads PNYTYEVGSWIGFAIMT. Topologically, residues 263-264 are lumenal; the sequence is QC. The helical transmembrane segment at 265 to 292 threads the bilayer; the sequence is VPVALFSLVGFTQMTIWAKGKHRSYLKE. Topologically, residues 293-308 are cytoplasmic; the sequence is FRDYPPLRMPIIPFLL.

The protein belongs to the steroid 5-alpha reductase family. In terms of assembly, interacts with ELOVL1 and LASS2. In terms of processing, glycosylated. Expressed at high levels in brain and is also found at lower levels in several other tissues.

It is found in the endoplasmic reticulum membrane. It catalyses the reaction a very-long-chain 2,3-saturated fatty acyl-CoA + NADP(+) = a very-long-chain (2E)-enoyl-CoA + NADPH + H(+). The catalysed reaction is octadecanoyl-CoA + NADP(+) = (2E)-octadecenoyl-CoA + NADPH + H(+). The enzyme catalyses (2E,7Z,10Z,13Z,16Z)-docosapentaenoyl-CoA + NADPH + H(+) = (7Z,10Z,13Z,16Z)-docosatetraenoyl-CoA + NADP(+). It carries out the reaction (2E,7Z,10Z,13Z,16Z,19Z)-docosahexaenoyl-CoA + NADPH + H(+) = (7Z,10Z,13Z,16Z,19Z)-docosapentaenoyl-CoA + NADP(+). It catalyses the reaction (2E,8Z,11Z,14Z)-eicosatetraenoyl-CoA + NADPH + H(+) = (8Z,11Z,14Z)-eicosatrienoyl-CoA + NADP(+). The catalysed reaction is (2E)-hexadecenoyl-CoA + NADPH + H(+) = hexadecanoyl-CoA + NADP(+). The protein operates within lipid metabolism; fatty acid biosynthesis. It participates in lipid metabolism; sphingolipid metabolism. Its function is as follows. Involved in both the production of very long-chain fatty acids for sphingolipid synthesis and the degradation of the sphingosine moiety in sphingolipids through the sphingosine 1-phosphate metabolic pathway. Catalyzes the last of the four reactions of the long-chain fatty acids elongation cycle. This endoplasmic reticulum-bound enzymatic process, allows the addition of 2 carbons to the chain of long- and very long-chain fatty acids/VLCFAs per cycle. This enzyme reduces the trans-2,3-enoyl-CoA fatty acid intermediate to an acyl-CoA that can be further elongated by entering a new cycle of elongation. Thereby, it participates in the production of VLCFAs of different chain lengths that are involved in multiple biological processes as precursors of membrane lipids and lipid mediators. Catalyzes the saturation step of the sphingosine 1-phosphate metabolic pathway, the conversion of trans-2-hexadecenoyl-CoA to palmitoyl-CoA. This Rattus norvegicus (Rat) protein is Very-long-chain enoyl-CoA reductase (Tecr).